The following is a 308-amino-acid chain: Oligopeptide transport ATP-binding protein OppF (308 aa).

One can recognise an ABC transporter domain in the interval 9-254; sequence VEVKNVSLTF…PIHPYTQSLL (246 aa). 46 to 53 provides a ligand contact to ATP; that stretch reads GESGSGKT.

The protein belongs to the ABC transporter superfamily. In terms of assembly, the complex is composed of two ATP-binding proteins (OppD and OppF), two transmembrane proteins (OppB and OppC) and a solute-binding protein (OppA).

Its subcellular location is the cell membrane. It carries out the reaction a [peptide](out) + ATP + H2O = a [peptide](in) + ADP + phosphate + H(+). Part of the ABC transporter complex OppABCDF involved in the uptake of oligopeptides. Probably responsible for energy coupling to the transport system. This is Oligopeptide transport ATP-binding protein OppF (oppF) from Streptococcus mutans serotype c (strain ATCC 700610 / UA159).